The primary structure comprises 93 residues: uncharacterized protein (93 aa).

The segment at 35 to 72 (KSVPPPTPPKPVKKTPSPTLPKPSKQKQEPQVEVNEDR) is disordered. Basic and acidic residues predominate over residues 60–72 (QKQEPQVEVNEDR).

This is an uncharacterized protein from Ostreid herpesvirus 1 (isolate France) (OsHV-1).